Reading from the N-terminus, the 254-residue chain is Thiazole synthase (254 aa).

The Schiff-base intermediate with DXP role is filled by Lys95. 1-deoxy-D-xylulose 5-phosphate-binding positions include Gly156, 182–183, and 204–205; these read AG and NT.

It belongs to the ThiG family. As to quaternary structure, homotetramer. Forms heterodimers with either ThiH or ThiS.

Its subcellular location is the cytoplasm. It carries out the reaction [ThiS sulfur-carrier protein]-C-terminal-Gly-aminoethanethioate + 2-iminoacetate + 1-deoxy-D-xylulose 5-phosphate = [ThiS sulfur-carrier protein]-C-terminal Gly-Gly + 2-[(2R,5Z)-2-carboxy-4-methylthiazol-5(2H)-ylidene]ethyl phosphate + 2 H2O + H(+). The protein operates within cofactor biosynthesis; thiamine diphosphate biosynthesis. In terms of biological role, catalyzes the rearrangement of 1-deoxy-D-xylulose 5-phosphate (DXP) to produce the thiazole phosphate moiety of thiamine. Sulfur is provided by the thiocarboxylate moiety of the carrier protein ThiS. In vitro, sulfur can be provided by H(2)S. The protein is Thiazole synthase of Shewanella baltica (strain OS223).